A 305-amino-acid polypeptide reads, in one-letter code: Probable branched-chain-amino-acid aminotransferase (305 aa).

Lysine 156 carries the N6-(pyridoxal phosphate)lysine modification.

This sequence belongs to the class-IV pyridoxal-phosphate-dependent aminotransferase family. Requires pyridoxal 5'-phosphate as cofactor.

The enzyme catalyses L-leucine + 2-oxoglutarate = 4-methyl-2-oxopentanoate + L-glutamate. The catalysed reaction is L-isoleucine + 2-oxoglutarate = (S)-3-methyl-2-oxopentanoate + L-glutamate. It catalyses the reaction L-valine + 2-oxoglutarate = 3-methyl-2-oxobutanoate + L-glutamate. It functions in the pathway amino-acid biosynthesis; L-isoleucine biosynthesis; L-isoleucine from 2-oxobutanoate: step 4/4. Its pathway is amino-acid biosynthesis; L-leucine biosynthesis; L-leucine from 3-methyl-2-oxobutanoate: step 4/4. The protein operates within amino-acid biosynthesis; L-valine biosynthesis; L-valine from pyruvate: step 4/4. In terms of biological role, acts on leucine, isoleucine and valine. This is Probable branched-chain-amino-acid aminotransferase (ilvE) from Synechocystis sp. (strain ATCC 27184 / PCC 6803 / Kazusa).